A 142-amino-acid chain; its full sequence is Large ribosomal subunit protein uL13 (142 aa).

Belongs to the universal ribosomal protein uL13 family. As to quaternary structure, part of the 50S ribosomal subunit.

This protein is one of the early assembly proteins of the 50S ribosomal subunit, although it is not seen to bind rRNA by itself. It is important during the early stages of 50S assembly. This is Large ribosomal subunit protein uL13 from Erwinia tasmaniensis (strain DSM 17950 / CFBP 7177 / CIP 109463 / NCPPB 4357 / Et1/99).